Consider the following 1548-residue polypeptide: Multidrug resistance protein (1548 aa).

Residues 1 to 238 (MVDNGHVTIA…YHVWAQILPK (238 aa)) lie on the Cytoplasmic side of the membrane. An ABC transmembrane type-1 1 domain is found at 231–514 (VWAQILPKLL…IPIIISSILQ (284 aa)). The helical transmembrane segment at 239 to 256 (LLSDVTALMLPVLLEYFV) threads the bilayer. Asn-263 carries N-linked (GlcNAc...) asparagine glycosylation. Transmembrane regions (helical) follow at residues 266–287 (WGWGLGLALTIFLTNVIQSCSA), 349–367 (VMYFWSAPLQLVLCLLLLI), 375–392 (VPGMAVLFVTLPLQAVIS), 463–480 (ATPTLVIAVVFILYHVSG), and 500–519 (VSFFMIPIIISSILQCFVSA). The Cytoplasmic segment spans residues 520 to 932 (KRVTAFIECP…PWSTYVAYLK (413 aa)). The region spanning 634–855 (VEEGDREYYQ…ALEETLRGEL (222 aa)) is the ABC transporter 1 domain. 667-674 (GSTGSGKS) serves as a coordination point for ATP. 4 helical membrane-spanning segments follow: residues 933–950 (SCGGLEAWGCLLATFALT), 975–993 (TYLYVYLFIVFLEIFGSPL), 1051–1070 (GYLYLLEYFFSMCSTVIIMV), and 1072–1088 (VQPFVLVAIVPCVYSYY). Residues 940–1221 (WGCLLATFAL…LVRQVAMVEA (282 aa)) enclose the ABC transmembrane type-1 2 domain. Asn-1095 and Asn-1154 each carry an N-linked (GlcNAc...) asparagine glycan. The next 2 membrane-spanning stretches (helical) occupy residues 1164 to 1182 (LEFLSCVVTFMVAFIGVIG) and 1186 to 1205 (GASSQNIGLISLSLTMSMTL). The Cytoplasmic portion of the chain corresponds to 1206–1548 (TETLNWLVRQ…RIVQPAVLSD (343 aa)). The region spanning 1286–1521 (LVLEGVQMRY…HQSMFHSMVE (236 aa)) is the ABC transporter 2 domain. 1320–1327 (GRTGSGKS) contacts ATP.

The protein belongs to the ABC transporter superfamily. ABCB family. Multidrug resistance exporter (TC 3.A.1.201) subfamily.

It is found in the membrane. It carries out the reaction ATP + H2O + xenobioticSide 1 = ADP + phosphate + xenobioticSide 2.. The sequence is that of Multidrug resistance protein (PGPA) from Leishmania tarentolae (Sauroleishmania tarentolae).